The sequence spans 256 residues: uncharacterized protein (256 aa).

A coiled-coil region spans residues 187–223; the sequence is MEEEEISEVEDALNVLQRLCAQEEGDNKEAETNNNNY.

This is an uncharacterized protein from Ostreid herpesvirus 1 (isolate France) (OsHV-1).